We begin with the raw amino-acid sequence, 439 residues long: Fibulin-7 (439 aa).

The signal sequence occupies residues 1-24 (MVPSSPRALFLLLLILACPEPRAS). Positions 28 to 53 (LSKQQLLSAIRQLQQLLKGQETRFAE) form a coiled coil. Residues 79–136 (VSCPALNTPADGRKFGSKYLVDHEVHFTCNPGFRLVGPSSVVCLPNGTWTGEQPHCRG) enclose the Sushi domain. 11 disulfide bridges follow: Cys81-Cys121, Cys107-Cys134, Cys140-Cys151, Cys145-Cys160, Cys162-Cys171, Cys228-Cys244, Cys240-Cys253, Cys255-Cys268, Cys274-Cys287, Cys281-Cys296, and Cys301-Cys318. The N-linked (GlcNAc...) asparagine glycan is linked to Asn124. An EGF-like 1; calcium-binding domain is found at 136–172 (GISECSSQPCQNGGTCVEGVNQYRCICPPGRTGNRCQ). The region spanning 224–269 (DVNECELYGQEGRPRLCMHACVNTPGSYRCTCPGGYRTLADGKSCE) is the EGF-like 2; calcium-binding domain. An EGF-like 3; calcium-binding domain is found at 270 to 319 (DVDECVGLQPVCPQGTTCINTGGSFQCVSPECPEGSGNVSYVKTSPFQCE). Asn307 carries N-linked (GlcNAc...) asparagine glycosylation.

This sequence belongs to the fibulin family. In terms of assembly, interacts with heparin, FBLN1, FN1 and DSPP. Preferentially binds dental mesenchyme cells and odontoblasts but not dental epithelial cells or nondental cells. Binding requires a heparan sulfate-containing receptor on the cell surface as well as an integrin. Post-translationally, N-glycosylated.

The protein resides in the secreted. Its subcellular location is the extracellular space. It localises to the extracellular matrix. Functionally, an adhesion molecule that interacts with extracellular matrix molecules in developing teeth and may play important roles in differentiation and maintenance of odontoblasts as well as in dentin formation. The polypeptide is Fibulin-7 (FBLN7) (Homo sapiens (Human)).